Consider the following 344-residue polypeptide: Heat-inducible transcription repressor HrcA (344 aa).

Belongs to the HrcA family.

Functionally, negative regulator of class I heat shock genes (grpE-dnaK-dnaJ and groELS operons). Prevents heat-shock induction of these operons. The chain is Heat-inducible transcription repressor HrcA from Streptococcus pneumoniae (strain Taiwan19F-14).